Consider the following 256-residue polypeptide: uncharacterized protein (256 aa).

The first 24 residues, 1 to 24, serve as a signal peptide directing secretion; it reads MIKRVNKLVIGISLLFLVISITAG. Cysteine 25 carries N-palmitoyl cysteine lipidation. Cysteine 25 carries the S-diacylglycerol cysteine lipid modification.

This sequence belongs to the staphylococcal tandem lipoprotein family.

It is found in the cell membrane. This is an uncharacterized protein from Staphylococcus aureus (strain bovine RF122 / ET3-1).